Reading from the N-terminus, the 134-residue chain is Major capsid protein (134 aa).

As to quaternary structure, homodimer.

The protein localises to the virion. Self-assembles to form a helical, filamentous nucleocapsid. The capsid proteins wrap around the DNA and maintain it in an A-form by non-specific desolvation and specific coordination of the DNA phosphate groups by positively charged residues. This certainly protects the viral DNA under conditions such as the extreme desiccation of its host. The sequence is that of Major capsid protein from Saccharolobus solfataricus rod-shaped virus 1 (SSRV1).